A 149-amino-acid polypeptide reads, in one-letter code: D-aminoacyl-tRNA deacylase (149 aa).

The Gly-cisPro motif, important for rejection of L-amino acids motif lies at 137-138; the sequence is GP.

The protein belongs to the DTD family. In terms of assembly, homodimer.

It localises to the cytoplasm. It catalyses the reaction glycyl-tRNA(Ala) + H2O = tRNA(Ala) + glycine + H(+). It carries out the reaction a D-aminoacyl-tRNA + H2O = a tRNA + a D-alpha-amino acid + H(+). Functionally, an aminoacyl-tRNA editing enzyme that deacylates mischarged D-aminoacyl-tRNAs. Also deacylates mischarged glycyl-tRNA(Ala), protecting cells against glycine mischarging by AlaRS. Acts via tRNA-based rather than protein-based catalysis; rejects L-amino acids rather than detecting D-amino acids in the active site. By recycling D-aminoacyl-tRNA to D-amino acids and free tRNA molecules, this enzyme counteracts the toxicity associated with the formation of D-aminoacyl-tRNA entities in vivo and helps enforce protein L-homochirality. This chain is D-aminoacyl-tRNA deacylase, found in Clostridium botulinum (strain 657 / Type Ba4).